The following is a 155-amino-acid chain: Ribosomal RNA large subunit methyltransferase H (155 aa).

Residues leucine 72, glycine 103, and 122-127 each bind S-adenosyl-L-methionine; that span reads LSDLTL.

Belongs to the RNA methyltransferase RlmH family. As to quaternary structure, homodimer.

It localises to the cytoplasm. The catalysed reaction is pseudouridine(1915) in 23S rRNA + S-adenosyl-L-methionine = N(3)-methylpseudouridine(1915) in 23S rRNA + S-adenosyl-L-homocysteine + H(+). Its function is as follows. Specifically methylates the pseudouridine at position 1915 (m3Psi1915) in 23S rRNA. This is Ribosomal RNA large subunit methyltransferase H from Acidovorax ebreus (strain TPSY) (Diaphorobacter sp. (strain TPSY)).